A 573-amino-acid chain; its full sequence is MLWRDVCEIFNKIEKTTKRLEKRDYFIKLIDMVKEKGKPEDLKKICYMAIGRVYPEYDERELGIGEKLLINAVTSIGIKKDELLEKIKETGDIGLAIEQLKSKIKQASLFFQPLTVDEVYETLKRVGEIEGEGSQKKKLRLISSLFLRASPIECRYLARLILEDMRIGMNVPTILDALSVYFNVPKEKLEKIYAITNDIGLLAEKLLMGDLESEELKLKLFRPIKPMLAQLTPSIEEALLEMGRAQFETKYDGARVQIHKDGNKVKIYSRRLEDVTNALPEIVEAVKNINVDKLIVEGECVAIDKQTGKPRPFQDILRRFRRKYDIGKMMKEINLRVYLFDILYKDGVSFIDEEFEKRRKVLEEIVGYENDWRTERKRIEKELKSDKIIDISYKLVTNDAKEAREFYNWSLSIGHEGVMIKNLKAPYTPGSRVRTMYKFKPTLESLDVVITKAKRGMGKRKDWYGSFEICVRDEEGNLYPIGHVGTGLTEADLEFLKEEIDKIIIRDLGEEVEVEPKIVIEVAYEEIQKSDKYPCGYALRFPRVVRFRFDKGVNEINTIEDVERIYEIQRGRK.

Residue Glu-248 coordinates ATP. The N6-AMP-lysine intermediate role is filled by Lys-250. ATP-binding residues include Arg-255, Arg-270, Glu-299, Phe-340, Arg-432, and Lys-438.

It belongs to the ATP-dependent DNA ligase family. Requires Mg(2+) as cofactor.

It catalyses the reaction ATP + (deoxyribonucleotide)n-3'-hydroxyl + 5'-phospho-(deoxyribonucleotide)m = (deoxyribonucleotide)n+m + AMP + diphosphate.. DNA ligase that seals nicks in double-stranded DNA during DNA replication, DNA recombination and DNA repair. The protein is DNA ligase of Methanocaldococcus jannaschii (strain ATCC 43067 / DSM 2661 / JAL-1 / JCM 10045 / NBRC 100440) (Methanococcus jannaschii).